We begin with the raw amino-acid sequence, 146 residues long: Snaclec CTL-Eoc124 (146 aa).

A signal peptide spans 1–23 (MGRFISVSFGLLVVFLSLSGTGA). 3 disulfide bridges follow: Cys25–Cys36, Cys53–Cys142, and Cys119–Cys134. The 112-residue stretch at 32-143 (YQGHCYRVFN…CSRTNNVACK (112 aa)) folds into the C-type lectin domain.

Belongs to the snaclec family. In terms of assembly, heterodimer; disulfide-linked. In terms of tissue distribution, expressed by the venom gland.

The protein localises to the secreted. Functionally, interferes with one step of hemostasis (modulation of platelet aggregation, or coagulation cascade, for example). The polypeptide is Snaclec CTL-Eoc124 (Echis ocellatus (Ocellated saw-scaled viper)).